Here is a 307-residue protein sequence, read N- to C-terminus: Ribosomal RNA small subunit methyltransferase H (307 aa).

Residues 32–34, D52, F78, D100, and Q107 each bind S-adenosyl-L-methionine; that span reads GGH.

This sequence belongs to the methyltransferase superfamily. RsmH family.

The protein resides in the cytoplasm. It catalyses the reaction cytidine(1402) in 16S rRNA + S-adenosyl-L-methionine = N(4)-methylcytidine(1402) in 16S rRNA + S-adenosyl-L-homocysteine + H(+). Specifically methylates the N4 position of cytidine in position 1402 (C1402) of 16S rRNA. This Coxiella burnetii (strain CbuG_Q212) (Coxiella burnetii (strain Q212)) protein is Ribosomal RNA small subunit methyltransferase H.